The following is a 395-amino-acid chain: Acetate kinase 1 (395 aa).

Asn-8 contacts Mg(2+). Lys-15 is an ATP binding site. Arg-89 is a binding site for substrate. The active-site Proton donor/acceptor is the Asp-146. Residues 206-210 (HIGNG), 283-285 (DMR), and 330-334 (GIGEN) contribute to the ATP site. Residue Glu-382 participates in Mg(2+) binding.

The protein belongs to the acetokinase family. As to quaternary structure, homodimer. Requires Mg(2+) as cofactor. Mn(2+) serves as cofactor.

It localises to the cytoplasm. It carries out the reaction acetate + ATP = acetyl phosphate + ADP. It participates in metabolic intermediate biosynthesis; acetyl-CoA biosynthesis; acetyl-CoA from acetate: step 1/2. Its function is as follows. Catalyzes the formation of acetyl phosphate from acetate and ATP. Can also catalyze the reverse reaction. The protein is Acetate kinase 1 of Lactococcus lactis subsp. lactis (strain IL1403) (Streptococcus lactis).